A 202-amino-acid polypeptide reads, in one-letter code: Superoxide dismutase [Mn] (202 aa).

4 residues coordinate Mn(2+): His27, His82, Asp164, and His168.

The protein belongs to the iron/manganese superoxide dismutase family. As to quaternary structure, homodimer. Mn(2+) serves as cofactor.

The catalysed reaction is 2 superoxide + 2 H(+) = H2O2 + O2. In terms of biological role, destroys superoxide anion radicals which are normally produced within the cells and which are toxic to biological systems. The chain is Superoxide dismutase [Mn] (sodA) from Listeria monocytogenes serovar 1/2a (strain ATCC BAA-679 / EGD-e).